A 334-amino-acid polypeptide reads, in one-letter code: Transcription factor MYB92 (334 aa).

HTH myb-type domains lie at 9-61 and 62-116; these read DSGL…TNYL and RPDI…KKKL. DNA-binding regions (H-T-H motif) lie at residues 37-61 and 89-112; these read WRAL…TNYL and WSTI…NTHL.

As to quaternary structure, interacts with FBX5. As to expression, highly expressed in roots and at lower levels in stems, flowers and siliques.

The protein resides in the nucleus. Its function is as follows. Probable transcription factor. The protein is Transcription factor MYB92 of Arabidopsis thaliana (Mouse-ear cress).